Here is a 362-residue protein sequence, read N- to C-terminus: Ferrochelatase (362 aa).

Residues His-228 and Glu-309 each coordinate Fe cation.

It belongs to the ferrochelatase family.

The protein resides in the cytoplasm. The catalysed reaction is heme b + 2 H(+) = protoporphyrin IX + Fe(2+). It participates in porphyrin-containing compound metabolism; protoheme biosynthesis; protoheme from protoporphyrin-IX: step 1/1. In terms of biological role, catalyzes the ferrous insertion into protoporphyrin IX. The protein is Ferrochelatase of Bordetella pertussis (strain Tohama I / ATCC BAA-589 / NCTC 13251).